A 289-amino-acid chain; its full sequence is ATP synthase gamma chain (289 aa).

The protein belongs to the ATPase gamma chain family. As to quaternary structure, F-type ATPases have 2 components, CF(1) - the catalytic core - and CF(0) - the membrane proton channel. CF(1) has five subunits: alpha(3), beta(3), gamma(1), delta(1), epsilon(1). CF(0) has three main subunits: a, b and c.

It is found in the cell inner membrane. Its function is as follows. Produces ATP from ADP in the presence of a proton gradient across the membrane. The gamma chain is believed to be important in regulating ATPase activity and the flow of protons through the CF(0) complex. The protein is ATP synthase gamma chain of Halorhodospira halophila (strain DSM 244 / SL1) (Ectothiorhodospira halophila (strain DSM 244 / SL1)).